A 585-amino-acid chain; its full sequence is Arginine--tRNA ligase (585 aa).

Positions alanine 131 to histidine 141 match the 'HIGH' region motif.

Belongs to the class-I aminoacyl-tRNA synthetase family. In terms of assembly, monomer.

It localises to the cytoplasm. The enzyme catalyses tRNA(Arg) + L-arginine + ATP = L-arginyl-tRNA(Arg) + AMP + diphosphate. This is Arginine--tRNA ligase from Brucella anthropi (strain ATCC 49188 / DSM 6882 / CCUG 24695 / JCM 21032 / LMG 3331 / NBRC 15819 / NCTC 12168 / Alc 37) (Ochrobactrum anthropi).